Consider the following 352-residue polypeptide: Elongation factor Tu, mitochondrial (352 aa).

A tr-type G domain is found at 45 to 241; it reads RPHVNVGTIG…AIDTHIPLPH (197 aa). The tract at residues 54-61 is G1; it reads GHVDHGKT. GTP-binding residues include D57, G59, K60, T61, and T62. T61 lines the Mg(2+) pocket. The segment at 95–99 is G2; it reads GITIN. A G3 region spans residues 116-119; sequence DCPG. Positions 171, 174, 209, 210, and 211 each coordinate GTP. The interval 171–174 is G4; the sequence is NKAD. Residues 209–211 are G5; it reads SAL.

It is found in the mitochondrion. The catalysed reaction is GTP + H2O = GDP + phosphate + H(+). Its function is as follows. GTP hydrolase that promotes the GTP-dependent binding of aminoacyl-tRNA to the A-site of ribosomes during protein biosynthesis. This Gallus gallus (Chicken) protein is Elongation factor Tu, mitochondrial.